We begin with the raw amino-acid sequence, 165 residues long: MIKIIGLDPGMSKTGWAIIRLEEKNNIKFLGGGTISTDGKLGVGERLHIIFEQLKKVIFLYSPNEAAVEKIFINKNPKSSLTLGYARAIAILILRMTDLPMNEYDANYIKKSITGNGHADKGQIIFMVKQIVKSSNIKCHHTADALATAICHAYTKNFCFMGIGS.

Catalysis depends on residues aspartate 8, glutamate 69, and histidine 141. Mg(2+) is bound by residues aspartate 8, glutamate 69, and histidine 141.

It belongs to the RuvC family. In terms of assembly, homodimer which binds Holliday junction (HJ) DNA. The HJ becomes 2-fold symmetrical on binding to RuvC with unstacked arms; it has a different conformation from HJ DNA in complex with RuvA. In the full resolvosome a probable DNA-RuvA(4)-RuvB(12)-RuvC(2) complex forms which resolves the HJ. The cofactor is Mg(2+).

It localises to the cytoplasm. It carries out the reaction Endonucleolytic cleavage at a junction such as a reciprocal single-stranded crossover between two homologous DNA duplexes (Holliday junction).. In terms of biological role, the RuvA-RuvB-RuvC complex processes Holliday junction (HJ) DNA during genetic recombination and DNA repair. Endonuclease that resolves HJ intermediates. Cleaves cruciform DNA by making single-stranded nicks across the HJ at symmetrical positions within the homologous arms, yielding a 5'-phosphate and a 3'-hydroxyl group; requires a central core of homology in the junction. The consensus cleavage sequence is 5'-(A/T)TT(C/G)-3'. Cleavage occurs on the 3'-side of the TT dinucleotide at the point of strand exchange. HJ branch migration catalyzed by RuvA-RuvB allows RuvC to scan DNA until it finds its consensus sequence, where it cleaves and resolves the cruciform DNA. This is Crossover junction endodeoxyribonuclease RuvC from Wolbachia pipientis subsp. Culex pipiens (strain wPip).